Consider the following 80-residue polypeptide: Cytochrome c oxidase subunit 7A1, mitochondrial (80 aa).

The N-terminal 21 residues, 1-21 (MRALRVSQALVRSFSSTARNR), are a transit peptide targeting the mitochondrion. Topologically, residues 22 to 46 (FENRVAEKQKLFQEDNGLPVHLKGG) are mitochondrial matrix. Residues 47–75 (ATDNILYRVTMTLCLGGTLYSLYCLGWAS) traverse the membrane as a helical segment. Residues 76–80 (FPHKK) lie on the Mitochondrial intermembrane side of the membrane.

Belongs to the cytochrome c oxidase VIIa family. As to quaternary structure, component of the complex IV (CIV, cytochrome c oxidase), a multisubunit enzyme composed of 14 subunits. The complex is composed of a catalytic core of 3 subunits MT-CO1, MT-CO2 and MT-CO3, encoded in the mitochondrial DNA, and 11 supernumerary subunits COX4I1 (or COX4I2), COX5A, COX5B, COX6A2 (or COX6A1), COX6B1 (or COX6B2), COX6C, COX7A1 (or COX7A2), COX7B, COX7C, COX8B and NDUFA4, which are encoded in the nuclear genome. The complex exists as a monomer or a dimer and forms supercomplexes (SCs) in the inner mitochondrial membrane with NADH-ubiquinone oxidoreductase (complex I, CI) and ubiquinol-cytochrome c oxidoreductase (cytochrome b-c1 complex, complex III, CIII), resulting in different assemblies (supercomplex SCI(1)III(2)IV(1) and megacomplex MCI(2)III(2)IV(2)).

The protein localises to the mitochondrion inner membrane. The protein operates within energy metabolism; oxidative phosphorylation. Its function is as follows. Component of the mitochondrial respiratory complex IV (CIV, also named cytochrome c oxidase complex), the last enzyme in the mitochondrial electron transport chain which drives oxidative phosphorylation. The CIV complex is the component of the respiratory chain that catalyzes the reduction of oxygen to water. Acts as an assembly factor that specifically drives the homodimerization of CIV complexes, mediating the formation of mitochondrial respiratory supercomplexes (respirasomes) containing two CIV: supercomplxes with two molecules of CIV show improved activity. Despite being highly expressed in brown adipose tissue, not required for thermogenesis. The polypeptide is Cytochrome c oxidase subunit 7A1, mitochondrial (COX7A1) (Bos taurus (Bovine)).